Reading from the N-terminus, the 67-residue chain is Vespin (67 aa).

Residues 1-21 (MHPIIWELSHMVDLQAAAQKL) form the signal peptide.

Expressed by the venom gland.

It localises to the secreted. In terms of biological role, shows contractile activity on isolated ileum smooth muscle. This Vespa magnifica (Hornet) protein is Vespin.